The chain runs to 874 residues: Probable inorganic carbon transporter subunit DabA (874 aa).

Residues Cys398, Asp400, His580, and Cys595 each coordinate Zn(2+).

Belongs to the inorganic carbon transporter (TC 9.A.2) DabA family. In terms of assembly, forms a complex with DabB. Requires Zn(2+) as cofactor.

Its subcellular location is the cell membrane. Its function is as follows. Part of an energy-coupled inorganic carbon pump. The chain is Probable inorganic carbon transporter subunit DabA from Bacillus cereus (strain ZK / E33L).